The primary structure comprises 547 residues: Chaperonin GroEL (547 aa).

ATP contacts are provided by residues 30-33 (TLGP), Lys51, 87-91 (DGTTT), Gly415, 479-481 (NAA), and Asp495.

This sequence belongs to the chaperonin (HSP60) family. In terms of assembly, forms a cylinder of 14 subunits composed of two heptameric rings stacked back-to-back. Interacts with the co-chaperonin GroES.

It localises to the cytoplasm. The catalysed reaction is ATP + H2O + a folded polypeptide = ADP + phosphate + an unfolded polypeptide.. Its function is as follows. Together with its co-chaperonin GroES, plays an essential role in assisting protein folding. The GroEL-GroES system forms a nano-cage that allows encapsulation of the non-native substrate proteins and provides a physical environment optimized to promote and accelerate protein folding. This is Chaperonin GroEL from Polynucleobacter necessarius subsp. necessarius (strain STIR1).